Reading from the N-terminus, the 466-residue chain is Cysteine--tRNA ligase 1 (466 aa).

Zn(2+) is bound at residue cysteine 27. Positions 29–39 (PTVQSPPHIGH) match the 'HIGH' region motif. Zn(2+)-binding residues include cysteine 211, histidine 236, and glutamate 240. Positions 267-271 (KMSKS) match the 'KMSKS' region motif. Lysine 270 is an ATP binding site.

The protein belongs to the class-I aminoacyl-tRNA synthetase family. As to quaternary structure, monomer. Zn(2+) serves as cofactor.

It localises to the cytoplasm. The enzyme catalyses tRNA(Cys) + L-cysteine + ATP = L-cysteinyl-tRNA(Cys) + AMP + diphosphate. This Tropheryma whipplei (strain TW08/27) (Whipple's bacillus) protein is Cysteine--tRNA ligase 1.